The sequence spans 479 residues: Transcript termination protein A18 (479 aa).

The 157-residue stretch at 99-255 folds into the Helicase ATP-binding domain; it reads KNKHKRPTYI…NDIINVSNSL (157 aa). 112–119 contacts ATP; that stretch reads LACGFGKT. Positions 205–208 match the DESH box motif; that stretch reads DESH. The 162-residue stretch at 308–469 folds into the Helicase C-terminal domain; the sequence is ILDTIIYDFN…EKKGKKKELA (162 aa).

It belongs to the helicase family. Poxviruses subfamily. In terms of assembly, interacts with G2. Might be part of a transcription complex composed at least of G2, A18, and H5.

The protein resides in the virion. In terms of biological role, DNA helicase which seems to act as a postreplicative transcription termination factor. Involved in ATP-dependent release of nascent RNA. Forms a stable complex with single-stranded DNA, and to a lesser extent RNA. In Homo sapiens (Human), this protein is Transcript termination protein A18.